The sequence spans 217 residues: Thiosulfate dehydrogenase electron acceptor (217 aa).

The N-terminal stretch at 1–28 (MRQFIPMRRVLAVATLGALFWAAPASWA) is a signal peptide. Cytochrome c domains are found at residues 29-104 (AAPP…SKLK) and 116-206 (AAAA…AAQP). Residues Cys37, Cys40, His41, Cys137, Cys140, and His141 each contribute to the heme c site.

Binds 2 heme c groups covalently per subunit.

Acts as an electron acceptor for the thiosulfate dehydrogenase TsdA. This chain is Thiosulfate dehydrogenase electron acceptor (tsdB), found in Thiomonas intermedia (strain K12) (Thiobacillus intermedius).